The primary structure comprises 512 residues: Sucrose transport protein SUC5 (512 aa).

Residues 1–27 (MGALEAERAANNATALETQSSPEDLGQ) are disordered. Topologically, residues 1 to 33 (MGALEAERAANNATALETQSSPEDLGQPSPLRK) are cytoplasmic. Polar residues predominate over residues 11–22 (NNATALETQSSP). A Phosphoserine modification is found at serine 20. Residues 34-54 (IISVASIAAGVQFGWALQLSL) traverse the membrane as a helical segment. Over 55-67 (LTPYIQLLGIPHK) the chain is Extracellular. The chain crosses the membrane as a helical span at residues 68–88 (WSSYMWLCGPISGMIVQPIVG). The Cytoplasmic segment spans residues 89–102 (YHSDRCESRFGRRR). The helical transmembrane segment at 103–123 (PFIAAGVALVAVSVFLIGFAA) threads the bilayer. At 124 to 140 (DMGHSFGDKLENKVRTR) the chain is on the extracellular side. The chain crosses the membrane as a helical span at residues 141 to 161 (AIIIFLTGFWFLDVANNTLQG). At 162-179 (PCRAFLADLAAGDAKKTR) the chain is on the cytoplasmic side. Residues 180–200 (VANACFSFFMAVGNVLGYAAG) form a helical membrane-spanning segment. At 201 to 225 (SYTNLHKMFPFTMTKACDIYCANLK) the chain is on the extracellular side. A helical membrane pass occupies residues 226 to 246 (TCFFLSITLLLIVTFSSLWYV). Residues 247 to 281 (KDKQWSPPQGDKEEKTSSLFFFGEIFGAVRHMKRP) lie on the Cytoplasmic side of the membrane. A helical transmembrane segment spans residues 282–302 (MVMLLIVTVINWIAWFPFILY). At 303–333 (DTDWMGREVYGGNSDGDERSKKLYDQGVQAG) the chain is on the extracellular side. A helical transmembrane segment spans residues 334-354 (ALGLMFNSILLGFVSLGVESI). Residues 355–363 (GRKMGGAKR) lie on the Cytoplasmic side of the membrane. Residues 364 to 384 (LWGCVNFILAIGLAMTVLVTK) traverse the membrane as a helical segment. The Extracellular portion of the chain corresponds to 385–406 (SAEHHREIAGPLAGPSSGIKAG). The chain crosses the membrane as a helical span at residues 407–427 (VFSLFTVLGIPLAITYSIPFA). The Cytoplasmic portion of the chain corresponds to 428 to 440 (LASIFSTNSGAGQ). The chain crosses the membrane as a helical span at residues 441–461 (GLSLGVLNIAICIPQMIVSFS). The Extracellular segment spans residues 462-473 (SGPLDAQFGGGN). The helical transmembrane segment at 474–494 (LPSFVVGAIAAAVSGVLALTV) threads the bilayer. Over 495–512 (LPSPPPDAPAMSGAMGFH) the chain is Cytoplasmic.

The protein belongs to the glycoside-pentoside-hexuronide (GPH) cation symporter transporter (TC 2.A.2.4) family. Widely expressed. Expressed in the endosperm and on the epidermis of the outer surface of the cotyledons of torpedo-stage or older embryos.

It is found in the cell membrane. The enzyme catalyses sucrose(out) + H(+)(out) = sucrose(in) + H(+)(in). The protein operates within glycan biosynthesis; sucrose metabolism. Inhibited by protonophores (e.g. carbonyl cyanide m-chlorophenyl-hydrazone (CCCP)) and SH group inhibitors (e.g. p-chloromercuribenzene sulphonic acid (PCMBS)). Responsible in a heterologous system for the transport of sucrose into the cell, with the concomitant uptake of protons (symport system). Can also transport biotin, and probably maltose at a lesser rate. In planta, the role of SUC5 for the transport of sucrose seems to be negligible. Plays a role in the nutrition of the filial tissues during early seed development and is probably involved in the import of biotin into the endosperm and the embryo epidermis. This is Sucrose transport protein SUC5 from Arabidopsis thaliana (Mouse-ear cress).